Here is an 824-residue protein sequence, read N- to C-terminus: MMQNVHLAPETDEDDLYSGYNDYNPIYDIEELENDAAFQQAVRTSHGRRPPITAKISSTAVTRPIATGYGSKTSLASSIGRPMTGAIQDGVTRPMTAVRAAGFTKAALRGSAFDPLSQSRGPASPLEAKKKDSPEEKIKQLEKEVNELVEESCIANSCGDLKLALEKAKDAGRKERVLVRQREQVTTPENINLDLTYSVLFNLASQYSVNEMYAEALNTYQVIVKNKMFSNAGILKMNMGNIYLKQRNYSKAIKFYRMALDQVPSVNKQMRIKIMQNIGVTFIQAGQYSDAINSYEHIMSMAPNLKAGYNLTICYFAIGDREKMKKAFQKLITVPLEIDEDKYISPSDDPHTNLVTEAIKNDHLRQMERERKAMAEKYIMTSAKLIAPVIETSFAAGYDWCVEVVKASQYVELANDLEINKAVTYLRQKDYNQAVEILKVLEKKDSRVKSAAATNLSALYYMGKDFAQASSYADIAVNSDRYNPAALTNKGNTVFANGDYEKAAEFYKEALRNDSSCTEALYNIGLTYEKLNRLDEALDCFLKLHAILRNSAEVLYQIANIYELMENPSQAIEWLMQVVSVIPTDPQVLSKLGELYDREGDKSQAFQYYYESYRYFPCNIEVIEWLGAYYIDTQFWEKAIQYFERASLIQPTQVKWQLMVASCFRRSGNYQKALDTYKDTHRKFPENVECLRFLVRLCTDLGLKDAQEYARKLKRLEKMKEIREQRIKSGRDGSGGSRGKREGSASGDSGQNYSASSKGERLSARLRALPGTNEPYESSSNKEIDASYVDPLGPQIERPKTAAKKRIDEDDFADEELGDDLLPE.

Positions 113–134 (FDPLSQSRGPASPLEAKKKDSP) are disordered. TPR repeat units lie at residues 197-230 (YSVLFNLASQYSVNEMYAEALNTYQVIVKNKMFS), 233-266 (GILKMNMGNIYLKQRNYSKAIKFYRMALDQVPSV), 272-305 (IKIMQNIGVTFIQAGQYSDAINSYEHIMSMAPNL), 307-338 (AGYNLTICYFAIGDREKMKKAFQKLITVPLEI), 415-448 (NDLEINKAVTYLRQKDYNQAVEILKVLEKKDSRV), 450-483 (SAAATNLSALYYMGKDFAQASSYADIAVNSDRYN), 484-517 (PAALTNKGNTVFANGDYEKAAEFYKEALRNDSSC), 518-551 (TEALYNIGLTYEKLNRLDEALDCFLKLHAILRNS), 552-585 (AEVLYQIANIYELMENPSQAIEWLMQVVSVIPTD), 586-619 (PQVLSKLGELYDREGDKSQAFQYYYESYRYFPCN), 620-653 (IEVIEWLGAYYIDTQFWEKAIQYFERASLIQPTQ), and 654-687 (VKWQLMVASCFRRSGNYQKALDTYKDTHRKFPEN). Residues 724 to 824 (EQRIKSGRDG…EELGDDLLPE (101 aa)) are disordered. Residues 748-757 (DSGQNYSASS) are compositionally biased toward polar residues. The segment covering 797–808 (ERPKTAAKKRID) has biased composition (basic and acidic residues). Residues 809–824 (EDDFADEELGDDLLPE) are compositionally biased toward acidic residues.

As to quaternary structure, component of the IFT complex B, at least composed of IFT20, IFT22, IFT25, IFT27, IFT46, IFT52, TRAF3IP1/IFT54, IFT57, IFT74, IFT80, IFT81, and IFT88. Interacts with IFT20, IFT22, IFT25, IFT27, IFT52, TRAF3IP1, IFT74, IFT80 and IFT81. Interacts with IFT172. Interacts with IFT57. Interacts with IFT46. Interacts with IFT70B. Interacts with C2CD3. Interacts with ENTR1 (via N-terminus). Interacts with LRRC56. Interacts with DZIP1. Interacts with CCDC38. Interacts with CCDC146. Interacts with CFAP53. As to expression, expressed in the heart, brain, liver, lung, kidney, skeletal muscle and pancreas.

The protein localises to the cytoplasm. It localises to the cytoskeleton. Its subcellular location is the microtubule organizing center. It is found in the centrosome. The protein resides in the centriole. The protein localises to the cell projection. It localises to the cilium. Its subcellular location is the cilium basal body. It is found in the flagellum. Functionally, positively regulates primary cilium biogenesis. Also involved in autophagy since it is required for trafficking of ATG16L and the expansion of the autophagic compartment. This chain is Intraflagellar transport protein 88 homolog (IFT88), found in Homo sapiens (Human).